We begin with the raw amino-acid sequence, 298 residues long: Protoheme IX farnesyltransferase 1 (298 aa).

A run of 9 helical transmembrane segments spans residues 21–41, 43–63, 94–114, 118–138, 144–164, 168–188, 215–235, 236–256, and 274–294; these read QVWW…INSF, SYLI…SMGA, KGAF…LLIF, LAAL…SYLL, YSII…WYTV, FSWI…VHVW, TAVS…IPYF, LGFF…PIVI, and FIYT…IHII.

Belongs to the UbiA prenyltransferase family. Protoheme IX farnesyltransferase subfamily.

The protein localises to the cell membrane. It carries out the reaction heme b + (2E,6E)-farnesyl diphosphate + H2O = Fe(II)-heme o + diphosphate. It functions in the pathway porphyrin-containing compound metabolism; heme O biosynthesis; heme O from protoheme: step 1/1. Functionally, converts heme B (protoheme IX) to heme O by substitution of the vinyl group on carbon 2 of heme B porphyrin ring with a hydroxyethyl farnesyl side group. The protein is Protoheme IX farnesyltransferase 1 of Picrophilus torridus (strain ATCC 700027 / DSM 9790 / JCM 10055 / NBRC 100828 / KAW 2/3).